A 63-amino-acid chain; its full sequence is Conotoxin PnMRCL-0111 (63 aa).

The first 19 residues, 1 to 19 (MRCLPVFIVLLLLIVSAPG), serve as a signal peptide directing secretion. A propeptide spanning residues 20-49 (FDARPKTEDDVPLSSFHDDLQRTVRTLLDI) is cleaved from the precursor. Tryptophan amide is present on Trp-62.

It belongs to the conotoxin T superfamily. In terms of processing, contains 2 disulfide bonds that can be either 'C1-C3, C2-C4' or 'C1-C4, C2-C3', since these disulfide connectivities have been observed for conotoxins with cysteine framework V (for examples, see AC P0DQQ7 and AC P81755). Expressed by the venom duct.

The protein localises to the secreted. In Conus pennaceus (Feathered cone), this protein is Conotoxin PnMRCL-0111.